The chain runs to 308 residues: Putative protein TIC 214 N-terminal part (308 aa).

6 consecutive transmembrane segments (helical) span residues 18–38 (IINS…FSIG), 64–84 (FITG…HLAL), 87–107 (PHTI…WNNH), 124–144 (LSIQ…HFIL), 172–192 (VGWL…LSWI), and 215–235 (IFSI…PSPI). Residues 239 to 249 (KLKETSEMEER) show a composition bias toward basic and acidic residues. The interval 239–308 (KLKETSEMEE…RDPSEWKGNI (70 aa)) is disordered. The span at 250-262 (GESEEETDVEIET) shows a compositional bias: acidic residues. The span at 264–273 (SETKETKQEQ) shows a compositional bias: basic and acidic residues. Positions 275 to 293 (GSTEEDPSLCSEEQEDPDK) are enriched in acidic residues. Positions 294-308 (LDETGRDPSEWKGNI) are enriched in basic and acidic residues.

This sequence belongs to the TIC214 family. As to quaternary structure, part of the Tic complex.

It localises to the plastid. It is found in the chloroplast inner membrane. Involved in protein precursor import into chloroplasts. May be part of an intermediate translocation complex acting as a protein-conducting channel at the inner envelope. The sequence is that of Putative protein TIC 214 N-terminal part from Piper cenocladum (Ant piper).